Here is a 281-residue protein sequence, read N- to C-terminus: uncharacterized protein (281 aa).

The protein localises to the plastid. It localises to the chloroplast. This is an uncharacterized protein from Euglena gracilis.